A 282-amino-acid polypeptide reads, in one-letter code: DegV domain-containing protein spr1415 (282 aa).

The DegV domain maps to 3-280 (LAVFTDSSAY…AGSIALGYIP (278 aa)). Hexadecanoate-binding residues include T61 and S94.

May bind long-chain fatty acids, such as palmitate, and may play a role in lipid transport or fatty acid metabolism. The protein is DegV domain-containing protein spr1415 of Streptococcus pneumoniae (strain ATCC BAA-255 / R6).